Reading from the N-terminus, the 630-residue chain is MDSDAAPSVTPGAVAFVLENASPDAATGVPVPEIVLQVVDLKPIGTRFTFLASDGKDKIKTMLLTQLAPEVRSGNIQNLGVIRVLDYTCNTIGEKQEKVLIITKLEVVFKALDSEIKCEAEKQEEKPAILLSPKEESVVLSKPTNAPPLPPVVLKPKQEVKSASQIVNEQRGNAAPAARLAMTRRVHPLISLNPYQGNWIIKVRVTSKGNLRTYKNARGEGCVFNVELTDVDGTQIQATMFNEAAKKFYPMFELGKVYYISKGSLRVANKQFKTVHNDYEMTLNENAVVEEAEGETFIPQIQYNFVKIDQLGPYVGGRELVDVIGVVQSVSPTLSVRRKIDNETIPKRDIVVADDSSKTVTISLWNDLATTTGQELLDMVDSAPIIAIKSLKVSDFQGLSLSTVGRSTIVVNPDLPEAEQLRAWYDSEGKGTSMASIGSDMGASRVGGARSMYSDRVFLSHITSDPNLGQDKPVFFSLNAYISLIKPDQTMWYRACKTCNKKVTEAIGSGYWCEGCQKNDAECSLRYIMVIKVSDPTGEAWLSLFNDQAERIVGCSADELDRIRKEEGDDSYLLKLKEATWVPHLFRVSVTQNEYMNEKRQRITVRSEAPVDHAAEAKYMLEEIAKLTGC.

The OB DNA-binding region spans 200–282; it reads IIKVRVTSKG…KTVHNDYEMT (83 aa). A C4-type zinc finger spans residues 496-516; that stretch reads CKTCNKKVTEAIGSGYWCEGC.

It belongs to the replication factor A protein 1 family. As to quaternary structure, heterotrimer of RPA1, RPA2 and RPA3 (canonical replication protein A complex). Interacts with RPA2A. As to expression, expressed in root tips, roots, shoot apical meristem (SAM) and young leaves, and at lower levels in mature leaves, flag leaves and ears.

The protein localises to the nucleus. In terms of biological role, component of the replication protein A complex (RPA) required for DNA recombination, repair and replication. The activity of RPA is mediated by single-stranded DNA binding and protein interactions. Probably involved in repair of double-strand DNA breaks (DSBs) induced by genotoxic stresses. The protein is Replication protein A 70 kDa DNA-binding subunit B (RPA1B) of Oryza sativa subsp. japonica (Rice).